The following is a 215-amino-acid chain: MATQNADVTDATDYKKPPAETEQKALTIQPRSNKAPSDEELVRIINAAQKRGLTPAAFVQAAIVFTMDKGATDSTIFTGKYNTFPMKSLALRCKDAGVPVHKLCYFYTKPAYANRRVANQPPARWTNENVPKANKWAAFDTFDALLDPYVVPSSVPYDEPTPEDRQVNEIFKKDNLSQAASRNQLLGTQASITRGRLNGAPALPNNGQYFIEAPQ.

Positions 1–34 are disordered; sequence MATQNADVTDATDYKKPPAETEQKALTIQPRSNK. The segment covering 12–23 has biased composition (basic and acidic residues); it reads TDYKKPPAETEQ. Over residues 24 to 34 the composition is skewed to polar residues; it reads KALTIQPRSNK.

It belongs to the potexvirus capsid protein family.

The protein localises to the virion. Its function is as follows. Required for genome encapsidation. Forms ribonucleoprotein complexes along with TGB1 helicase and viral RNA. This is Coat protein from Setaria italica (Foxtail millet).